The following is a 252-amino-acid chain: Probable transcriptional regulatory protein Cagg_2594 (252 aa).

Over residues Met-1–Lys-14 the composition is skewed to basic residues. Residues Met-1 to Gly-22 are disordered.

It belongs to the TACO1 family.

It localises to the cytoplasm. This chain is Probable transcriptional regulatory protein Cagg_2594, found in Chloroflexus aggregans (strain MD-66 / DSM 9485).